The primary structure comprises 2275 residues: Serine-rich adhesin for platelets (2275 aa).

The first 89 residues, 1–89, serve as a signal peptide directing secretion; that stretch reads MSKRQKEFHD…VNMLHDQQAF (89 aa). A serine-rich repeat region 1, SRR1 region spans residues 90 to 264; it reads AASDAPLTSE…TANTITVNKD (175 aa). The segment covering 100–111 has biased composition (polar residues); sequence LNTQSETVGNQN. Disordered regions lie at residues 100-229 and 751-2247; these read LNTQ…STST and NSMS…GLLG. Low complexity predominate over residues 112 to 128; that stretch reads STTIEASTSTADSTSVT. The segment covering 129–140 has biased composition (polar residues); the sequence is KNSSSVQTSNSD. Low complexity predominate over residues 150–229; that stretch reads VTSTTNSTSN…NKTSTTSTST (80 aa). The segment at 265-751 is non-repeat region (NRR); the sequence is NLKQYMTTSG…TTFKYEVTRN (487 aa). 2 stretches are compositionally biased toward low complexity: residues 752-1392 and 1402-2218; these read SMSD…LSLS and SNSA…ATSE. Residues 752 to 2236 form a serine-rich repeat region 2, SRR2 region; sequence SMSDSVSTSG…AQSEKRLPDT (1485 aa). The LPXTG sorting signal signature appears at 2233–2237; that stretch reads LPDTG. T2236 is modified (pentaglycyl murein peptidoglycan amidated threonine). Residues 2237–2275 constitute a propeptide, removed by sortase; that stretch reads GDSIKQNGLLGGVMTLLVGLGLMKRKKKKDENDQDDSQA.

The protein belongs to the serine-rich repeat protein (SRRP) family. In terms of assembly, interacts with human gp-340 (DMBT1). Post-translationally, proteolytically cleaved by a metalloprotease. Glycosylated. It is probable that most of the Ser residues in SSR1 and SSR2 are O-GlcNAcylated. Sequential glycosylation by sugar transferases are able to generate complex sugar polymorphisms.

It is found in the secreted. The protein localises to the cell wall. Mediates binding to human platelets, possibly through a receptor-ligand interaction. Probably associated with virulence in endovascular infection. Interacts with host (human) gp-340 via the non-repeat region (NRR or binding region). Binding is inhibited by N-acetylneuraminic acid (NeuAc). This is Serine-rich adhesin for platelets (sraP) from Staphylococcus aureus (strain MW2).